The sequence spans 1427 residues: Tonsoku-like protein (1427 aa).

The disordered stretch occupies residues 1 to 21; it reads MTSTKEIKQLQKAKSKAQSSN. A compositionally biased stretch (low complexity) spans 10–21; the sequence is LQKAKSKAQSSN. TPR repeat units follow at residues 27–60, 67–100, 107–147, 162–195, 202–235, 242–275, 311–344, and 352–385; these read ASLC…SEIL, AVAN…ARSV, QRAL…VDER, ARLL…AEKN, YRAN…ARKM, SECF…GSQQ, LDLS…AEAL, and AVIH…RKGN. The segment at 465 to 502 is disordered; that stretch reads LSLDQSEDEDEEDEVDNSEPLEDSDIQYSESDDEDLEG. Positions 469-501 are enriched in acidic residues; sequence QSEDEDEEDEVDNSEPLEDSDIQYSESDDEDLE. 3 ANK repeats span residues 522-551, 555-584, and 591-620; these read KGET…PVNV, CGWT…NVND, and GGIT…SVTV. Disordered stretches follow at residues 692–801, 865–922, and 941–961; these read PLLR…SESG, KKKR…KMNQ, and IMTQ…QAMP. Residues 742-761 show a composition bias toward low complexity; it reads DDSSSSDNPDSDCSLSPLRP. A compositionally biased stretch (polar residues) spans 773-783; sequence SPQEVPSSQEL. Over residues 871 to 880 the composition is skewed to basic and acidic residues; that stretch reads SEHNATRETT. The span at 881 to 890 shows a compositional bias: polar residues; the sequence is SRSQNNSSTI. Over residues 899–910 the composition is skewed to low complexity; sequence SCSSRGSLSLKK. LRR repeat units follow at residues 1113-1137, 1141-1168, 1174-1197, 1234-1258, 1293-1316, 1321-1346, and 1377-1400; these read QASL…MMAA, MPRL…AFET, FPCL…ALAS, TGNM…VLKT, DCPL…LLAR, CPSL…LLNG, and SDHI…ALQQ.

This sequence belongs to the Tonsoku family. In terms of assembly, component of the MMS22L-TONSL complex. Binds histones, with a strong preference for histone H3.1 (histones H3.1 and H3-4/H3.1t).

The protein resides in the nucleus. It localises to the chromosome. Its subcellular location is the cytoplasm. In terms of biological role, component of the MMS22L-TONSL complex, a complex that promotes homologous recombination-mediated repair of double-strand breaks (DSBs) at stalled or collapsed replication forks. The MMS22L-TONSL complex is required to maintain genome integrity during DNA replication. It mediates the assembly of RAD51 filaments on single-stranded DNA (ssDNA): the MMS22L-TONSL complex is recruited to DSBs following histone replacement by histone chaperones and eviction of the replication protein A complex (RPA/RP-A) from DSBs. Following recruitment to DSBs, the TONSL-MMS22L complex promotes recruitment of RAD51 filaments and subsequent homologous recombination. Within the complex, TONSL acts as a histone reader, which recognizes and binds newly synthesized histones following their replacement by histone chaperones. In Danio rerio (Zebrafish), this protein is Tonsoku-like protein (tonsl).